The sequence spans 2641 residues: Inverse autotransporter adhesin YeeJ (2641 aa).

Positions 1–25 are cleaved as a signal peptide; that stretch reads MGIKLRRLTAGICLITQLVFPMAAA. The region spanning 50-98 is the LysM domain; that stretch reads VPYTLGALESAQSVAERFGISVAELRKLNQFRTFARGFDNVRQGDELDV. The interval 125–400 is inverse autotransporter; it reads TSQQIGSLLA…SRFDLVDRNN (276 aa). The interval 513–605 is invasin 3 domain; the sequence is QKDSSVSLSS…GVDAAKAPAV (93 aa). Big-1 domains lie at 617 to 711, 721 to 815, 822 to 913, 920 to 1017, 1024 to 1116, 1123 to 1220, 1227 to 1319, 1326 to 1423, 1430 to 1523, 1531 to 1633, 1641 to 1734, 1741 to 1837, 1844 to 1941, 1948 to 2032, 2048 to 2141, 2142 to 2235, and 2244 to 2336; these read HSSI…AGFI, IATL…VSFV, QVDL…VIFI, ALTL…MTFV, VVVL…VNIA, QVTL…VTFV, LVVL…VHFI, IIEL…SINV, HLTL…VTYV, EISL…VNFI, QVNL…VTLI, KLAS…PTEV, ITSL…VIDQ, KLTL…IVKV, and VASF…ITLV. The tract at residues 2538–2641 is C-type lectin domain; sequence KSWWVNAGDA…FAYATCYKNL (104 aa).

It belongs to the intimin/invasin family.

The protein resides in the cell outer membrane. A probable inverse autotransporter, it may be involved in biofilm formation and cell adhesion. May bind peptidoglycan via its LysM domain. The sequence is that of Inverse autotransporter adhesin YeeJ (yeeJ) from Escherichia coli O157:H7.